The chain runs to 446 residues: Sensor-type histidine kinase PrrB (446 aa).

Helical transmembrane passes span 19-39 (VVAT…VVWV) and 151-171 (LLIC…LAAF). One can recognise an HAMP domain in the interval 172-222 (AVRPFKQLAQQTRSVDAGGEAPRVEVHGATEAVEIAEAMRGMLQRIWNEQN). Residues 237–446 (VSSHELRTPL…RLLLRISAPS (210 aa)) form the Histidine kinase domain. Histidine 240 is modified (phosphohistidine; by autocatalysis).

Autophosphorylated.

The protein resides in the cell membrane. The catalysed reaction is ATP + protein L-histidine = ADP + protein N-phospho-L-histidine.. Member of the two-component regulatory system PrrB/PrrA that is involved specifically in early intracellular multiplication of Mycobacterium and is essential for its viability. Functions as a sensor protein kinase which is autophosphorylated at a histidine residue and transfers its phosphate group to the conserved aspartic acid residue in the regulatory domain of PrrA. In turn, PrrA binds to the upstream promoter regions of target genes including itself to positively regulate their expression. In Mycobacterium leprae (strain TN), this protein is Sensor-type histidine kinase PrrB (prrB).